The sequence spans 684 residues: Agnestins biosynthesis cluster transcription factor AgnL11 (684 aa).

The segment at residues 25-51 is a DNA-binding region (zn(2)-C6 fungal-type); the sequence is CHFCRTKKLKCDRRFPCSNCRARRLSC. Residues 76-103 adopt a coiled-coil conformation; the sequence is NEELSENINELKARLQRLEELISVNAEE. Residues 601-644 are disordered; sequence KGSASARKDKNPIHGDTDRATPPGSSNLPQHDKSSSSSPAPPVW. Basic and acidic residues predominate over residues 606 to 619; it reads ARKDKNPIHGDTDR.

The protein localises to the nucleus. Its function is as follows. Transcription factor that regulates the expression of the gene cluster that mediates the biosynthesis of agnestins, dihydroxy-xanthone metabolites. In Paecilomyces divaricatus (Penicillium divaricatum), this protein is Agnestins biosynthesis cluster transcription factor AgnL11.